Consider the following 194-residue polypeptide: 5'-deoxynucleotidase VP0926 (194 aa).

Substrate is bound by residues 18–19 (RW) and histidine 33. The HD domain occupies 30–142 (VSEHSLQVAF…VKQADSICAY (113 aa)). A divalent metal cation-binding residues include histidine 33, histidine 68, and aspartate 69. Substrate contacts are provided by residues aspartate 69, 77 to 80 (DLPT), and aspartate 137. Aspartate 137 contacts a divalent metal cation.

This sequence belongs to the 5DNU family. In terms of assembly, homodimer. It depends on a divalent metal cation as a cofactor.

The protein localises to the cytoplasm. The catalysed reaction is a 2'-deoxyribonucleoside 5'-phosphate + H2O = a 2'-deoxyribonucleoside + phosphate. In terms of biological role, catalyzes the strictly specific dephosphorylation of 2'-deoxyribonucleoside 5'-monophosphates. The chain is 5'-deoxynucleotidase VP0926 from Vibrio parahaemolyticus serotype O3:K6 (strain RIMD 2210633).